The following is a 210-amino-acid chain: MSDTQQSAPDIFNTGLVPMVVEQSARGERAYDIFSRLLKERVIFLVGPVEDYQANLLVAQLLFLESENPDKDVHLYINSPGGSVTAGLAIYDTMQFIKPDVATLCVGQAASMGALLLAAGAEGKRHALPNSRMMIHQPLGGFQGQATDIDIHAREILSMRDRLNTILAHHTGQDIETIRQDTDRDNFMAAEAAAQYGLIDRVLTSRGASE.

The Nucleophile role is filled by serine 111. Histidine 136 is an active-site residue.

The protein belongs to the peptidase S14 family. As to quaternary structure, fourteen ClpP subunits assemble into 2 heptameric rings which stack back to back to give a disk-like structure with a central cavity, resembling the structure of eukaryotic proteasomes.

The protein localises to the cytoplasm. The catalysed reaction is Hydrolysis of proteins to small peptides in the presence of ATP and magnesium. alpha-casein is the usual test substrate. In the absence of ATP, only oligopeptides shorter than five residues are hydrolyzed (such as succinyl-Leu-Tyr-|-NHMec, and Leu-Tyr-Leu-|-Tyr-Trp, in which cleavage of the -Tyr-|-Leu- and -Tyr-|-Trp bonds also occurs).. In terms of biological role, cleaves peptides in various proteins in a process that requires ATP hydrolysis. Has a chymotrypsin-like activity. Plays a major role in the degradation of misfolded proteins. This is ATP-dependent Clp protease proteolytic subunit from Halorhodospira halophila (strain DSM 244 / SL1) (Ectothiorhodospira halophila (strain DSM 244 / SL1)).